Reading from the N-terminus, the 225-residue chain is MNSPIDKLERKIGYQFNDADLIHLALTHRSAAGKHNERLEFLGDSILSFVIADDLYHRFPKVNEGDMSRMRATLVRGHTLAELGREFELGDYLKLGPGELKSGGFRRDSILADAVEAIIGAVYLDSDTEVVRRIILSWYQSRLESIQPGVSQKDPKTRLQEFLQGRRNPLPVYTVTNIKGEAHNQEFTVECEVAGVDKPVIGKGTSRRKAEQAAAETALEQLSNV.

Residues 5–127 (IDKLERKIGY…IIGAVYLDSD (123 aa)) enclose the RNase III domain. Position 40 (glutamate 40) interacts with Mg(2+). Aspartate 44 is an active-site residue. Aspartate 113 and glutamate 116 together coordinate Mg(2+). Glutamate 116 is a catalytic residue. Residues 154-224 (DPKTRLQEFL…AETALEQLSN (71 aa)) form the DRBM domain.

It belongs to the ribonuclease III family. In terms of assembly, homodimer. The cofactor is Mg(2+).

It localises to the cytoplasm. It catalyses the reaction Endonucleolytic cleavage to 5'-phosphomonoester.. Its function is as follows. Digests double-stranded RNA. Involved in the processing of primary rRNA transcript to yield the immediate precursors to the large and small rRNAs (23S and 16S). Processes some mRNAs, and tRNAs when they are encoded in the rRNA operon. Processes pre-crRNA and tracrRNA of type II CRISPR loci if present in the organism. The chain is Ribonuclease 3 from Vibrio atlanticus (strain LGP32) (Vibrio splendidus (strain Mel32)).